The primary structure comprises 299 residues: Neomycin C epimerase (299 aa).

The 213-residue stretch at Pro10–Arg222 folds into the Radical SAM core domain. Residues Cys26, Cys30, Cys33, Cys226, and Cys247 each coordinate [4Fe-4S] cluster. Cys249 acts as the Proton donor in catalysis. [4Fe-4S] cluster is bound by residues Cys271 and Cys274.

The protein belongs to the radical SAM superfamily. The cofactor is [4Fe-4S] cluster.

It carries out the reaction neomycin C + AH2 + S-adenosyl-L-methionine = neomycin B + 5'-deoxyadenosine + L-methionine + A + H(+). It functions in the pathway antibiotic biosynthesis; neomycin biosynthesis. Catalyzes the last step of neomycin B biosynthesis, i.e. the irreversible epimerization at C-5''' of neomycin C to give neomycin B. To a lesser extent, is also able to convert neomycin Y2 to neomycin Y1. This Streptomyces fradiae (Streptomyces roseoflavus) protein is Neomycin C epimerase.